A 317-amino-acid polypeptide reads, in one-letter code: Acetyl-coenzyme A carboxylase carboxyl transferase subunit alpha (317 aa).

Residues 40–293 (LEKRSADALK…GDIITASLRS (254 aa)) form the CoA carboxyltransferase C-terminal domain.

The protein belongs to the AccA family. As to quaternary structure, acetyl-CoA carboxylase is a heterohexamer composed of biotin carboxyl carrier protein (AccB), biotin carboxylase (AccC) and two subunits each of ACCase subunit alpha (AccA) and ACCase subunit beta (AccD).

Its subcellular location is the cytoplasm. The catalysed reaction is N(6)-carboxybiotinyl-L-lysyl-[protein] + acetyl-CoA = N(6)-biotinyl-L-lysyl-[protein] + malonyl-CoA. It participates in lipid metabolism; malonyl-CoA biosynthesis; malonyl-CoA from acetyl-CoA: step 1/1. Its function is as follows. Component of the acetyl coenzyme A carboxylase (ACC) complex. First, biotin carboxylase catalyzes the carboxylation of biotin on its carrier protein (BCCP) and then the CO(2) group is transferred by the carboxyltransferase to acetyl-CoA to form malonyl-CoA. This Brucella anthropi (strain ATCC 49188 / DSM 6882 / CCUG 24695 / JCM 21032 / LMG 3331 / NBRC 15819 / NCTC 12168 / Alc 37) (Ochrobactrum anthropi) protein is Acetyl-coenzyme A carboxylase carboxyl transferase subunit alpha.